The following is a 398-amino-acid chain: Vacuolar protease A (398 aa).

An N-terminal signal peptide occupies residues methionine 1–alanine 18. Residues alanine 19 to methionine 70 constitute a propeptide, activation peptide. In terms of domain architecture, Peptidase A1 spans tyrosine 85–alanine 395. Aspartate 103 is a catalytic residue. Residues cysteine 116 and cysteine 121 are joined by a disulfide bond. N-linked (GlcNAc...) asparagine glycosylation is present at asparagine 138. The active site involves aspartate 287. A disulfide bond links cysteine 321 and cysteine 354. A glycan (N-linked (GlcNAc...) asparagine) is linked at asparagine 338.

Belongs to the peptidase A1 family.

It localises to the vacuole lumen. Its subcellular location is the secreted. It carries out the reaction Hydrolysis of proteins with broad specificity for peptide bonds. Cleaves -Leu-Leu-|-Val-Tyr- bond in a synthetic substrate. Does not act on esters of Tyr or Arg.. In terms of biological role, vacuolar aspartic endopeptidase which is probably also secreted and contributes to virulence. The protein is Vacuolar protease A (pep2) of Aspergillus fumigatus (strain ATCC MYA-4609 / CBS 101355 / FGSC A1100 / Af293) (Neosartorya fumigata).